The primary structure comprises 317 residues: Ribonuclease Z (317 aa).

Zn(2+)-binding residues include His-63, His-65, Asp-67, His-68, His-143, Asp-214, and His-272. Asp-67 acts as the Proton acceptor in catalysis.

This sequence belongs to the RNase Z family. As to quaternary structure, homodimer. Requires Zn(2+) as cofactor.

It carries out the reaction Endonucleolytic cleavage of RNA, removing extra 3' nucleotides from tRNA precursor, generating 3' termini of tRNAs. A 3'-hydroxy group is left at the tRNA terminus and a 5'-phosphoryl group is left at the trailer molecule.. Zinc phosphodiesterase, which displays some tRNA 3'-processing endonuclease activity. Probably involved in tRNA maturation, by removing a 3'-trailer from precursor tRNA. The chain is Ribonuclease Z from Ligilactobacillus salivarius (strain UCC118) (Lactobacillus salivarius).